The chain runs to 146 residues: Hemoglobin subunit beta (146 aa).

V1 is subject to N-acetylvaline. One can recognise a Globin domain in the interval 2-146; sequence HLTPEEKNAV…VANALAHKYH (145 aa). At T12 the chain carries Phosphothreonine. At S44 the chain carries Phosphoserine. At K59 the chain carries N6-acetyllysine. H63 serves as a coordination point for heme b. K82 carries the N6-acetyllysine modification. H92 provides a ligand contact to heme b. The residue at position 93 (C93) is an S-nitrosocysteine. The residue at position 144 (K144) is an N6-acetyllysine.

It belongs to the globin family. As to quaternary structure, heterotetramer of two alpha chains and two beta chains. Red blood cells.

In terms of biological role, involved in oxygen transport from the lung to the various peripheral tissues. This is Hemoglobin subunit beta (HBB) from Macaca mulatta (Rhesus macaque).